We begin with the raw amino-acid sequence, 220 residues long: Ribose-5-phosphate isomerase A (220 aa).

Substrate-binding positions include 29–32 (TGST), 82–85 (DGCD), and 95–98 (KGGG). Residue E104 is the Proton acceptor of the active site. Residue K122 participates in substrate binding.

This sequence belongs to the ribose 5-phosphate isomerase family. Homodimer.

The enzyme catalyses aldehydo-D-ribose 5-phosphate = D-ribulose 5-phosphate. The protein operates within carbohydrate degradation; pentose phosphate pathway; D-ribose 5-phosphate from D-ribulose 5-phosphate (non-oxidative stage): step 1/1. Functionally, catalyzes the reversible conversion of ribose-5-phosphate to ribulose 5-phosphate. This is Ribose-5-phosphate isomerase A from Laribacter hongkongensis (strain HLHK9).